Reading from the N-terminus, the 791-residue chain is Endonuclease MutS2 (791 aa).

Position 337–344 (337–344 (GPNTGGKT)) interacts with ATP. The disordered stretch occupies residues 689–715 (AAQASQKKPEKSVRSSRGLRSSRASSE). Residues 703 to 713 (SSRGLRSSRAS) are compositionally biased toward low complexity. One can recognise a Smr domain in the interval 716–791 (LDLRGQRYEE…GTGATIVNLQ (76 aa)).

This sequence belongs to the DNA mismatch repair MutS family. MutS2 subfamily. In terms of assembly, homodimer. Binds to stalled ribosomes, contacting rRNA.

Its function is as follows. Endonuclease that is involved in the suppression of homologous recombination and thus may have a key role in the control of bacterial genetic diversity. Acts as a ribosome collision sensor, splitting the ribosome into its 2 subunits. Detects stalled/collided 70S ribosomes which it binds and splits by an ATP-hydrolysis driven conformational change. Acts upstream of the ribosome quality control system (RQC), a ribosome-associated complex that mediates the extraction of incompletely synthesized nascent chains from stalled ribosomes and their subsequent degradation. Probably generates substrates for RQC. This Lactobacillus gasseri (strain ATCC 33323 / DSM 20243 / BCRC 14619 / CIP 102991 / JCM 1131 / KCTC 3163 / NCIMB 11718 / NCTC 13722 / AM63) protein is Endonuclease MutS2.